The primary structure comprises 515 residues: Bifunctional purine biosynthesis protein PurH (515 aa).

The 145-residue stretch at 1–145 (MTKRVLISVS…KNHASVTVVV (145 aa)) folds into the MGS-like domain.

The protein belongs to the PurH family.

It catalyses the reaction (6R)-10-formyltetrahydrofolate + 5-amino-1-(5-phospho-beta-D-ribosyl)imidazole-4-carboxamide = 5-formamido-1-(5-phospho-D-ribosyl)imidazole-4-carboxamide + (6S)-5,6,7,8-tetrahydrofolate. The catalysed reaction is IMP + H2O = 5-formamido-1-(5-phospho-D-ribosyl)imidazole-4-carboxamide. The protein operates within purine metabolism; IMP biosynthesis via de novo pathway; 5-formamido-1-(5-phospho-D-ribosyl)imidazole-4-carboxamide from 5-amino-1-(5-phospho-D-ribosyl)imidazole-4-carboxamide (10-formyl THF route): step 1/1. Its pathway is purine metabolism; IMP biosynthesis via de novo pathway; IMP from 5-formamido-1-(5-phospho-D-ribosyl)imidazole-4-carboxamide: step 1/1. The chain is Bifunctional purine biosynthesis protein PurH from Streptococcus pneumoniae serotype 2 (strain D39 / NCTC 7466).